An 80-amino-acid polypeptide reads, in one-letter code: Late cornified envelope protein 6A (80 aa).

A compositionally biased stretch (polar residues) spans Met1–Lys10. Disordered regions lie at residues Met1–Gln21 and Gly35–Lys60.

It belongs to the LCE family.

In terms of biological role, precursors of the cornified envelope of the stratum corneum. The polypeptide is Late cornified envelope protein 6A (LCE6A) (Homo sapiens (Human)).